A 570-amino-acid polypeptide reads, in one-letter code: Keratin, type I cytoskeletal 10 (570 aa).

The span at 1–16 (MSVLYSSSSKQFSSSR) shows a compositional bias: low complexity. The tract at residues 1–29 (MSVLYSSSSKQFSSSRSGGGGGGGSVRVS) is disordered. Residues 1–143 (MSVLYSSSSK…GDGGSLLSGN (143 aa)) form a head region. Phosphoserine occurs at positions 15 and 17. Arginine 32 is modified (asymmetric dimethylarginine; alternate). Arginine 32 bears the Omega-N-methylarginine; alternate mark. Residues serine 34, serine 45, serine 48, and serine 168 each carry the phosphoserine modification. The tract at residues 144 to 179 (GRVTMQNLNDRLASYMDKVRALEESNYELEGKIKEW) is coil 1A. The region spanning 144 to 458 (GRVTMQNLND…SLLEGEGSSS (315 aa)) is the IF rod domain. The interval 180–200 (YEKHGNSSQREPRDYSKYYKT) is linker 1. Residues 201-292 (IEDLKGQILT…KNHEEEMRDL (92 aa)) are coil 1B. Residues 293–315 (QNVSTGDVNVEMNAAPGVDLTQL) form a linker 12 region. The coil 2 stretch occupies residues 316-454 (LNNMRNQYEQ…QTYRSLLEGE (139 aa)). Residues 451–570 (LEGEGSSSGG…GDQSSKGPRY (120 aa)) are disordered. The tract at residues 455-570 (GSSSGGGGGR…GDQSSKGPRY (116 aa)) is tail. Residues 456–562 (SSSGGGGGRR…GGFKSSGGGD (107 aa)) are compositionally biased toward gly residues.

It belongs to the intermediate filament family. In terms of assembly, (Microbial infection) Interacts (via C-terminal tail domain) with the S.aureus clumping factor, clfB; this interaction probably mediates S.aureus attachment to the highly keratinized squamous epithelial cells from the nasal cavity. Heterotetramer of two type I and two type II keratins. Heterodimer with KRT1. Two heterodimers of KRT1 and KRT10 form a heterotetramer. The KRT10 subunit in the heterotetramer is probably disulfide-linked. Interacts with PLEC isoform 1C, when in a heterodimer with KRT1. As to quaternary structure, (Microbial infection) Interacts (via the C-terminal tail domain) with S.pneumoniae serine-rich repeat protein PsrP; this interaction probably mediates S.pneumoniae adherence to lung tissue and subsequent pathogenesis. In terms of tissue distribution, expressed in the suprabasal layers of the epidermis throughout the entire sole (at protein level). Expressed in the infundibular regions of the ear, the interscale regions of the tail, and the interfollicular epidermis of the back. Expressed in lung tissue from young mice (at protein level).

The protein localises to the secreted. It is found in the extracellular space. It localises to the cell surface. Its subcellular location is the cytoplasm. Its function is as follows. Plays a role in the establishment of the epidermal barrier on plantar skin. Involved in the maintenance of cell layer development and keratin filament bundles in suprabasal cells of the epithelium. (Microbial infection) Acts as a mediator of S.aureus adherence to desquamated nasal epithelial cells via clfB, and hence may play a role in nasal colonization. Functionally, (Microbial infection) Binds S.pneumoniae PsrP, mediating adherence of the bacteria to lung cell lines. This chain is Keratin, type I cytoskeletal 10 (Krt10), found in Mus musculus (Mouse).